Consider the following 155-residue polypeptide: Ribosomal RNA large subunit methyltransferase H (155 aa).

S-adenosyl-L-methionine-binding positions include Leu-72, Gly-103, and 122–127; that span reads LSPLTL.

Belongs to the RNA methyltransferase RlmH family. As to quaternary structure, homodimer.

It is found in the cytoplasm. The enzyme catalyses pseudouridine(1915) in 23S rRNA + S-adenosyl-L-methionine = N(3)-methylpseudouridine(1915) in 23S rRNA + S-adenosyl-L-homocysteine + H(+). Its function is as follows. Specifically methylates the pseudouridine at position 1915 (m3Psi1915) in 23S rRNA. The protein is Ribosomal RNA large subunit methyltransferase H of Aeromonas hydrophila subsp. hydrophila (strain ATCC 7966 / DSM 30187 / BCRC 13018 / CCUG 14551 / JCM 1027 / KCTC 2358 / NCIMB 9240 / NCTC 8049).